The primary structure comprises 410 residues: Elongation factor Tu, chloroplastic (410 aa).

One can recognise a tr-type G domain in the interval 10–213; the sequence is KPHLNIGTIG…TVDEYIPTPK (204 aa). The G1 stretch occupies residues 19–26; the sequence is GHVDHGKT. 19–26 lines the GTP pocket; the sequence is GHVDHGKT. Threonine 26 provides a ligand contact to Mg(2+). Residues 60–64 form a G2 region; that stretch reads GITIN. The tract at residues 81–84 is G3; sequence DCPG. Residues 81 to 85 and 136 to 139 contribute to the GTP site; these read DCPGH and NKAD. The tract at residues 136 to 139 is G4; sequence NKAD. The interval 174-176 is G5; the sequence is SAI.

It belongs to the TRAFAC class translation factor GTPase superfamily. Classic translation factor GTPase family. EF-Tu/EF-1A subfamily.

It localises to the plastid. The protein localises to the chloroplast. It catalyses the reaction GTP + H2O = GDP + phosphate + H(+). Functionally, GTP hydrolase that promotes the GTP-dependent binding of aminoacyl-tRNA to the A-site of ribosomes during protein biosynthesis. The chain is Elongation factor Tu, chloroplastic (tufA) from Codium fragile (Dead man's fingers).